We begin with the raw amino-acid sequence, 113 residues long: Beta-defensin 112 (113 aa).

3 cysteine pairs are disulfide-bonded: Cys54–Cys82, Cys61–Cys75, and Cys65–Cys83.

It belongs to the beta-defensin family.

It is found in the secreted. Functionally, has antibacterial activity. The sequence is that of Beta-defensin 112 (DEFB112) from Homo sapiens (Human).